A 484-amino-acid polypeptide reads, in one-letter code: 3-isopropylmalate dehydratase large subunit (484 aa).

[4Fe-4S] cluster is bound by residues Cys-352, Cys-412, and Cys-415. The interval 462 to 484 (GTLSSPSDLDPAPESAAVSSSAA) is disordered.

The protein belongs to the aconitase/IPM isomerase family. LeuC type 1 subfamily. As to quaternary structure, heterodimer of LeuC and LeuD. [4Fe-4S] cluster is required as a cofactor.

The catalysed reaction is (2R,3S)-3-isopropylmalate = (2S)-2-isopropylmalate. It participates in amino-acid biosynthesis; L-leucine biosynthesis; L-leucine from 3-methyl-2-oxobutanoate: step 2/4. Functionally, catalyzes the isomerization between 2-isopropylmalate and 3-isopropylmalate, via the formation of 2-isopropylmaleate. In Arthrobacter sp. (strain FB24), this protein is 3-isopropylmalate dehydratase large subunit.